Reading from the N-terminus, the 628-residue chain is Nuclear receptor subfamily 4 group A member 3 (628 aa).

The interval 1 to 112 (MPCVQAQYSP…HHHHHHHHHH (112 aa)) is activation function (AF)-1 domain. A required for DNA-PK heterotrimer region spans residues 1 to 140 (MPCVQAQYSP…PSTSMYFKQS (140 aa)). The interval 1–293 (MPCVQAQYSP…NRSSSSGEGT (293 aa)) is interaction with NCOA1, NCOA2, NCOA3 and KAT2B. Disordered stretches follow at residues 96 to 163 (HGYH…DELP) and 269 to 290 (ASSL…SSSG). The segment covering 97–113 (GYHHHHHHHHHHHHHHQ) has biased composition (basic residues). Residues 142–151 (PSTPTTPGFP) show a composition bias toward pro residues. Positions 270–289 (SSLLGESPSLPSPPNRSSSS) are enriched in low complexity. The segment at residues 291–366 (EGTCAVCGDN…VGMVKEVVRT (76 aa)) is a DNA-binding region (nuclear receptor). 2 NR C4-type zinc fingers span residues 294-314 (CAVC…CEGC) and 330-354 (CLAN…FQKC). A disordered region spans residues 366-396 (TDSLKGRRGRLPSKPKSPLQQEPSQPSPPSP). Over residues 379 to 389 (KPKSPLQQEPS) the composition is skewed to low complexity. The interval 381-628 (KSPLQQEPSQ…DKLFLDTLPF (248 aa)) is interaction with KAT2B. Residues 396-625 (PPICMMNALV…SVIDKLFLDT (230 aa)) enclose the NR LBD domain.

Belongs to the nuclear hormone receptor family. NR4 subfamily. In terms of assembly, interacts with SIX3 (via homeobox); differentially regulates the transcriptional activities of NR4A3. Interacts with NR3C1 (via nuclear receptor DNA-binding domain); the interactions represses transcription activity of NR4A3 on the POMC promoter Nur response element (NurRE). Interacts with TRIM28; the interactions potentiates NR4A3 activity on NurRE promoter. Binds DNA as a monomer and homodimer. Interacts with PARP1; activates PARP1 by improving acetylation of PARP1 and suppressing the interaction between PARP1 and SIRT1. Interacts with the constituents of DNA-PK heterotrimer PRKDC, XRCC6 and XRCC5; phosphorylates and prevents NR4A3 ubiquitinylation and degradation. Interacts with NCOA2; potentiates the activity of the NR4A3. Interacts with NCOA1, NCOA3, MED1 and KAT2B. Interacts with EP300 and NCOA2; mediates the recruitment of MED1 in the coactivator complex. Post-translationally, phosphorylated by PRKDC. Expressed at high levels in cultured apoptotic neuronal cells and fetal brain, and at low level in adult brain.

It localises to the nucleus. Its function is as follows. Transcriptional activator that binds to regulatory elements in promoter regions in a cell- and response element (target)-specific manner. Induces gene expression by binding as monomers to the NR4A1 response element (NBRE) 5'-AAAAGGTCA-3' site and as homodimers to the Nur response element (NurRE) site in the promoter of their regulated target genes. Plays a role in the regulation of proliferation, survival and differentiation of many different cell types and also in metabolism and inflammation. Mediates proliferation of vascular smooth muscle, myeloid progenitor cell and type B pancreatic cells; promotes mitogen-induced vascular smooth muscle cell proliferation through transactivation of SKP2 promoter by binding a NBRE site. Upon PDGF stimulation, stimulates vascular smooth muscle cell proliferation by regulating CCND1 and CCND2 expression. In islets, induces type B pancreatic cell proliferation through up-regulation of genes that activate cell cycle, as well as genes that cause degradation of the CDKN1A. Negatively regulates myeloid progenitor cell proliferation by repressing RUNX1 in a NBRE site-independent manner. During inner ear, plays a role as a key mediator of the proliferative growth phase of semicircular canal development. Also mediates survival of neuron and smooth muscle cells; mediates CREB-induced neuronal survival, and during hippocampus development, plays a critical role in pyramidal cell survival and axonal guidance. Is required for S phase entry of the cell cycle and survival of smooth muscle cells by inducing CCND1, resulting in RB1 phosphorylation. Binds to NBRE motif in CCND1 promoter, resulting in the activation of the promoter and CCND1 transcription. Also plays a role in inflammation; Upon TNF stimulation, mediates monocyte adhesion by inducing the expression of VCAM1 and ICAM1 by binding to the NBRE consensus site. In mast cells activated by Fc-epsilon receptor cross-linking, promotes the synthesis and release of cytokines but impairs events leading to degranulation. Also plays a role in metabolism; by modulating feeding behavior; and by playing a role in energy balance by inhibiting the glucocorticoid-induced orexigenic neuropeptides AGRP expression, at least in part by forming a complex with activated NR3C1 on the AGRP-glucocorticoid response element (GRE), and thus weakening the DNA binding activity of NR3C1. Upon catecholamines stimulation, regulates gene expression that controls oxidative metabolism in skeletal muscle. Plays a role in glucose transport by regulating translocation of the SLC2A4 glucose transporter to the cell surface. Finally, during gastrulation plays a crucial role in the formation of anterior mesoderm by controlling cell migration. Also participates in cardiac hypertrophy by activating PARP1. The polypeptide is Nuclear receptor subfamily 4 group A member 3 (Nr4a3) (Rattus norvegicus (Rat)).